A 155-amino-acid polypeptide reads, in one-letter code: RNA pyrophosphohydrolase (155 aa).

Residues 5–147 (KYRPNVAAII…KRQVYRQVIA (143 aa)) form the Nudix hydrolase domain. Positions 42-63 (GGIDEGETPLEALHRELLEEIG) match the Nudix box motif.

The protein belongs to the Nudix hydrolase family. RppH subfamily. It depends on a divalent metal cation as a cofactor.

Accelerates the degradation of transcripts by removing pyrophosphate from the 5'-end of triphosphorylated RNA, leading to a more labile monophosphorylated state that can stimulate subsequent ribonuclease cleavage. The protein is RNA pyrophosphohydrolase of Helicobacter pylori (strain G27).